A 398-amino-acid polypeptide reads, in one-letter code: cAMP-dependent protein kinase, catalytic subunit-like (398 aa).

Residues 90–344 (LERIITIGKG…TQDVKDHKWF (255 aa)) enclose the Protein kinase domain. ATP-binding positions include 96 to 104 (IGKGTFGRV) and Lys-119. Residue Asp-213 is the Proton acceptor of the active site. An AGC-kinase C-terminal domain is found at 345–398 (EKVNWDDTLHLRVEPPIVPTLYHPGDTGNFDDYEEDTTGGPLCSQRDRDLFAEW).

The protein belongs to the protein kinase superfamily. Ser/Thr protein kinase family. cAMP subfamily.

The enzyme catalyses L-seryl-[protein] + ATP = O-phospho-L-seryl-[protein] + ADP + H(+). It carries out the reaction L-threonyl-[protein] + ATP = O-phospho-L-threonyl-[protein] + ADP + H(+). The sequence is that of cAMP-dependent protein kinase, catalytic subunit-like from Caenorhabditis elegans.